The chain runs to 382 residues: uncharacterized protein (382 aa).

12 consecutive transmembrane segments (helical) span residues G14–A34, V45–I65, F79–A99, F102–S122, L131–S151, L157–F177, L204–P224, A235–I255, V270–P290, A291–C311, A325–M345, and F348–L368.

The protein belongs to the major facilitator superfamily. YcaD (TC 2.A.1.26) family.

It is found in the cell inner membrane. This is an uncharacterized protein from Shigella sonnei (strain Ss046).